Reading from the N-terminus, the 861-residue chain is 1,4-alpha-glucan-branching enzyme (861 aa).

(1,4-alpha-D-glucosyl)n-binding residues include W173 and K208. D429 functions as the Nucleophile in the catalytic mechanism. The Proton donor role is filled by E484.

Belongs to the glycosyl hydrolase 13 family. GlgB subfamily. In terms of assembly, monomer.

It localises to the plastid. It is found in the chloroplast. Its subcellular location is the amyloplast. The enzyme catalyses Transfers a segment of a (1-&gt;4)-alpha-D-glucan chain to a primary hydroxy group in a similar glucan chain.. It functions in the pathway glycan biosynthesis; starch biosynthesis. In terms of biological role, catalyzes the formation of the alpha-1,6-glucosidic linkages in starch by scission of a 1,4-alpha-linked oligosaccharide from growing alpha-1,4-glucan chains and the subsequent attachment of the oligosaccharide to the alpha-1,6 position. The chain is 1,4-alpha-glucan-branching enzyme (SBE1) from Solanum tuberosum (Potato).